Consider the following 254-residue polypeptide: Hydroxyacylglutathione hydrolase (254 aa).

Zn(2+) is bound by residues His52, His54, Asp56, His57, His109, Asp126, and His164.

The protein belongs to the metallo-beta-lactamase superfamily. Glyoxalase II family. In terms of assembly, monomer. The cofactor is Zn(2+).

It carries out the reaction an S-(2-hydroxyacyl)glutathione + H2O = a 2-hydroxy carboxylate + glutathione + H(+). It functions in the pathway secondary metabolite metabolism; methylglyoxal degradation; (R)-lactate from methylglyoxal: step 2/2. Functionally, thiolesterase that catalyzes the hydrolysis of S-D-lactoyl-glutathione to form glutathione and D-lactic acid. This is Hydroxyacylglutathione hydrolase from Stenotrophomonas maltophilia (strain R551-3).